A 186-amino-acid chain; its full sequence is Ribosome-recycling factor (186 aa).

The protein belongs to the RRF family.

Its subcellular location is the cytoplasm. Functionally, responsible for the release of ribosomes from messenger RNA at the termination of protein biosynthesis. May increase the efficiency of translation by recycling ribosomes from one round of translation to another. In Rubrobacter xylanophilus (strain DSM 9941 / JCM 11954 / NBRC 16129 / PRD-1), this protein is Ribosome-recycling factor.